A 98-amino-acid polypeptide reads, in one-letter code: MTKSELVELIASKQTQLSVKDVELAVKSIIEHMSQSLADGQRIEIRGFGSFSLHHRAARTGRNPKTGDAVQLPAKFVPHFKPGKELREQVNDSMKKGF.

The protein belongs to the bacterial histone-like protein family. In terms of assembly, heterodimer of an alpha and a beta chain.

In terms of biological role, this protein is one of the two subunits of integration host factor, a specific DNA-binding protein that functions in genetic recombination as well as in transcriptional and translational control. In Marinobacter nauticus (strain ATCC 700491 / DSM 11845 / VT8) (Marinobacter aquaeolei), this protein is Integration host factor subunit beta.